The primary structure comprises 478 residues: Adenosylhomocysteinase (478 aa).

Residues Thr-67, Asp-144, and Glu-204 each coordinate substrate. NAD(+) is bound at residue 205 to 207 (TTT). Substrate contacts are provided by Lys-234 and Asp-238. Residues Asn-239, 268 to 273 (GYGDVG), Glu-291, Asn-326, 347 to 349 (IGH), and Asn-392 each bind NAD(+).

The protein belongs to the adenosylhomocysteinase family. NAD(+) serves as cofactor.

The protein localises to the cytoplasm. It catalyses the reaction S-adenosyl-L-homocysteine + H2O = L-homocysteine + adenosine. It participates in amino-acid biosynthesis; L-homocysteine biosynthesis; L-homocysteine from S-adenosyl-L-homocysteine: step 1/1. Its function is as follows. May play a key role in the regulation of the intracellular concentration of adenosylhomocysteine. The sequence is that of Adenosylhomocysteinase from Nitrosomonas eutropha (strain DSM 101675 / C91 / Nm57).